A 164-amino-acid polypeptide reads, in one-letter code: Phosphopantetheine adenylyltransferase (164 aa).

Ser-9 provides a ligand contact to substrate. ATP-binding positions include 9 to 10 and His-17; that span reads SF. 3 residues coordinate substrate: Lys-41, Leu-73, and Lys-87. ATP-binding positions include 88 to 90, Glu-98, and 123 to 129; these read GLR and HSFLSSS.

Belongs to the bacterial CoaD family. Homohexamer. Requires Mg(2+) as cofactor.

The protein localises to the cytoplasm. The enzyme catalyses (R)-4'-phosphopantetheine + ATP + H(+) = 3'-dephospho-CoA + diphosphate. Its pathway is cofactor biosynthesis; coenzyme A biosynthesis; CoA from (R)-pantothenate: step 4/5. Its function is as follows. Reversibly transfers an adenylyl group from ATP to 4'-phosphopantetheine, yielding dephospho-CoA (dPCoA) and pyrophosphate. This is Phosphopantetheine adenylyltransferase from Rubrobacter xylanophilus (strain DSM 9941 / JCM 11954 / NBRC 16129 / PRD-1).